The following is a 222-amino-acid chain: Probable septum site-determining protein MinC (222 aa).

It belongs to the MinC family. In terms of assembly, interacts with MinD and FtsZ.

Functionally, cell division inhibitor that blocks the formation of polar Z ring septums. Rapidly oscillates between the poles of the cell to destabilize FtsZ filaments that have formed before they mature into polar Z rings. Prevents FtsZ polymerization. This is Probable septum site-determining protein MinC from Lysinibacillus sphaericus (strain C3-41).